A 420-amino-acid polypeptide reads, in one-letter code: Histidine--tRNA ligase (420 aa).

This sequence belongs to the class-II aminoacyl-tRNA synthetase family. In terms of assembly, homodimer.

Its subcellular location is the cytoplasm. The enzyme catalyses tRNA(His) + L-histidine + ATP = L-histidyl-tRNA(His) + AMP + diphosphate + H(+). In Thermotoga petrophila (strain ATCC BAA-488 / DSM 13995 / JCM 10881 / RKU-1), this protein is Histidine--tRNA ligase.